The following is a 443-amino-acid chain: MNRTKIDKLITDYPLVKNLINLEEVTWFNPQATTLEKGLPYVGLSQQDVADAEARLQRFAPYLCQAFPETQKTKGIIESDIVAIPTMQNALQQRYGVAITGRLLLKKDSHLPISGSIKARGGIYEVLTHAEKLALQAGLLQETDDYSKLFSDDFRQFFRQYRIAVGSTGNLGMSIGIMSAKLGFSVSVHMSADAREWKKRKLREHGVNVVEYAQDYGVAVAQGRKQAESDPNCFFIDDENSPTLFLGYSVAGDRLKQQFAEQQIVVDENHPLFVYLPCGVGGGPGGVAFGLKLAFGDHVHCIFAEPTHSPCMLLGVYTGLHDGIAVQDIGIDNITAADGLAVGRASGFVGRAMEHLLDGFYTLSDAEMYDLLGLLNQYEGIRLEPSALAGMPGPARVSSSLDYLEQNHFSVEKMRNATHLVWATGGGMVPVEEMEKYLATAKI.

An N6-(pyridoxal phosphate)lysine modification is found at Lys-118.

This sequence belongs to the serine/threonine dehydratase family. DsdA subfamily. In terms of assembly, monomer. The cofactor is pyridoxal 5'-phosphate.

It carries out the reaction D-serine = pyruvate + NH4(+). The chain is D-serine dehydratase from Yersinia enterocolitica serotype O:8 / biotype 1B (strain NCTC 13174 / 8081).